We begin with the raw amino-acid sequence, 192 residues long: Phosphoheptose isomerase (192 aa).

An SIS domain is found at 37–192 (LADSFKAGGK…IQLIEKEMVK (156 aa)). Substrate is bound at residue 52–54 (NGG). Residues His61 and Glu65 each contribute to the Zn(2+) site. Substrate contacts are provided by residues Glu65, 93 to 94 (ND), 119 to 121 (STS), Ser124, and Gln172. Gln172 and His180 together coordinate Zn(2+).

It belongs to the SIS family. GmhA subfamily. In terms of assembly, homotetramer. The cofactor is Zn(2+).

It localises to the cytoplasm. It catalyses the reaction 2 D-sedoheptulose 7-phosphate = D-glycero-alpha-D-manno-heptose 7-phosphate + D-glycero-beta-D-manno-heptose 7-phosphate. Its pathway is carbohydrate biosynthesis; D-glycero-D-manno-heptose 7-phosphate biosynthesis; D-glycero-alpha-D-manno-heptose 7-phosphate and D-glycero-beta-D-manno-heptose 7-phosphate from sedoheptulose 7-phosphate: step 1/1. Catalyzes the isomerization of sedoheptulose 7-phosphate in D-glycero-D-manno-heptose 7-phosphate. The polypeptide is Phosphoheptose isomerase (Shigella dysenteriae serotype 1 (strain Sd197)).